Here is a 24-residue protein sequence, read N- to C-terminus: Heat shock 70 kDa protein 4L (24 aa).

Thr-19 is modified (phosphothreonine).

This sequence belongs to the heat shock protein 70 family. In terms of assembly, homodimer. In the testis, forms a complex with p53 at 32.5 degrees Celsius which is scrotal temperature but not at 37 or 42 degrees Celsius. As to expression, expressed at high levels in testis and at much lower levels in brain. In testis, expressed mainly in germ cells. Widespread in brain with highest expression in cerebellum and medulla oblongata. Also expressed in renal medulla of water-restricted animals.

The protein localises to the cytoplasm. It is found in the nucleus. Its function is as follows. Possesses chaperone activity in vitro where it inhibits aggregation of citrate synthase. The protein is Heat shock 70 kDa protein 4L (Hspa4l) of Rattus norvegicus (Rat).